The sequence spans 378 residues: MVTDHSTPVTGRPRVAILFGGRSSEHAVSCVTAAGVMGAIDKNKYEVIPIGIAKSGQWVLASGDTSEWSLSSAALPEVAPSGRTVTLAEVGGEHQLIVTEPNAVPQELGSVDVVFPLLHGPWGEDGTIQGLLELSDTRYVGAGVLASAVGMDKHFMKVVFESAGLSVGPYVAVTDREWSTDAEAVRKRVDKLGFPVFVKPARAGSSMGISKVDSMEGLDAAIDEARRHDLKLVIEAGIVGREIECAVLQGRGTDAPRTSMPGEIAVAVGEHQFYDFAAKYVEDGAAALSCPADMPDEAIARVRELAAVAFDAVGAEGLSRVDFFYTPAGELIINEINTMPGFTPKSMYPQMWAASGLAYGDLIDELIHLALTRKTGLR.

Positions 157 to 368 constitute an ATP-grasp domain; it reads KVVFESAGLS…YGDLIDELIH (212 aa). 189-244 contributes to the ATP binding site; sequence VDKLGFPVFVKPARAGSSMGISKVDSMEGLDAAIDEARRHDLKLVIEAGIVGREIE. Positions 322, 335, and 337 each coordinate Mg(2+).

This sequence belongs to the D-alanine--D-alanine ligase family. Mg(2+) serves as cofactor. The cofactor is Mn(2+).

The protein localises to the cytoplasm. The catalysed reaction is 2 D-alanine + ATP = D-alanyl-D-alanine + ADP + phosphate + H(+). It functions in the pathway cell wall biogenesis; peptidoglycan biosynthesis. Cell wall formation. This chain is D-alanine--D-alanine ligase, found in Paenarthrobacter aurescens (strain TC1).